Here is a 595-residue protein sequence, read N- to C-terminus: Chaperone protein HscA homolog (595 aa).

It belongs to the heat shock protein 70 family.

Its function is as follows. Chaperone involved in the maturation of iron-sulfur cluster-containing proteins. Has a low intrinsic ATPase activity which is markedly stimulated by HscB. The polypeptide is Chaperone protein HscA homolog (Rickettsia akari (strain Hartford)).